Here is a 65-residue protein sequence, read N- to C-terminus: Alpha-toxin Bs-Tx28 (65 aa).

Positions 3–65 (RDAYIADDKN…VPIRIPGKCR (63 aa)) constitute an LCN-type CS-alpha/beta domain. 4 disulfide bridges follow: C13–C64, C17–C37, C23–C47, and C27–C49. R65 carries the arginine amide modification.

The protein belongs to the long (4 C-C) scorpion toxin superfamily. Sodium channel inhibitor family. Alpha subfamily. As to expression, expressed by the venom gland.

It is found in the secreted. Functionally, alpha toxins bind voltage-independently at site-3 of sodium channels (Nav) and inhibit the inactivation of the activated channels, thereby blocking neuronal transmission. This toxin inhibits the inactivation of activated TTX-sensitive sodium channels (Nav). The protein is Alpha-toxin Bs-Tx28 of Hottentotta tamulus sindicus (Scorpion).